A 396-amino-acid polypeptide reads, in one-letter code: E3 ubiquitin-protein transferase MAEA (396 aa).

Residues 1–124 are extracellular and involved in cell to cell contact; it reads MAVQESAAQL…AAASVWKRKR (124 aa). The residue at position 28 (Thr28) is a Phosphothreonine. In terms of domain architecture, LisH spans 121–153; the sequence is KRKRMDRMMVEHLLRCGYYNTAVKLARQSGIED. A CTLH domain is found at 159 to 216; that stretch reads MFLTAKEVEESLERRETATCLAWCHDNKSRLRKMKSCLEFSLRIQEFIELIRQNKRLD. The segment at 314-381 adopts an RING-Gid-type zinc-finger fold; that stretch reads CPVCSRSLNK…QDDKVVCPRT (68 aa).

Identified in the CTLH complex that contains GID4, RANBP9 and/or RANBP10, MKLN1, MAEA, RMND5A (or alternatively its paralog RMND5B), GID8, ARMC8, WDR26 and YPEL5. Within this complex, MAEA, RMND5A (or alternatively its paralog RMND5B), GID8, WDR26, and RANBP9 and/or RANBP10 form the catalytic core, while GID4, MKLN1, ARMC8 and YPEL5 have ancillary roles. Interacts with F-actin. Post-translationally, autoubiquitinated as component of the CTLH E3 ubiquitin-protein ligase complex (in vitro).

It localises to the cytoplasm. The protein localises to the nucleus. It is found in the nucleoplasm. The protein resides in the nucleus matrix. Its subcellular location is the cell membrane. It localises to the cytoskeleton. It catalyses the reaction S-ubiquitinyl-[E2 ubiquitin-conjugating enzyme]-L-cysteine + [acceptor protein]-L-lysine = [E2 ubiquitin-conjugating enzyme]-L-cysteine + N(6)-ubiquitinyl-[acceptor protein]-L-lysine.. Its function is as follows. Core component of the CTLH E3 ubiquitin-protein ligase complex that selectively accepts ubiquitin from UBE2H and mediates ubiquitination and subsequent proteasomal degradation of the transcription factor HBP1. MAEA and RMND5A are both required for catalytic activity of the CTLH E3 ubiquitin-protein ligase complex. MAEA is required for normal cell proliferation. The CTLH E3 ubiquitin-protein ligase complex is not required for the degradation of enzymes involved in gluconeogenesis, such as FBP1. Plays a role in erythroblast enucleation during erythrocyte maturation and in the development of mature macrophages. Mediates the attachment of erythroid cell to mature macrophages; this MAEA-mediated contact inhibits erythroid cell apoptosis. Participates in erythroblastic island formation, which is the functional unit of definitive erythropoiesis. Associates with F-actin to regulate actin distribution in erythroblasts and macrophages. May contribute to nuclear architecture and cells division events. The chain is E3 ubiquitin-protein transferase MAEA (MAEA) from Pongo abelii (Sumatran orangutan).